A 345-amino-acid polypeptide reads, in one-letter code: Anthranilate phosphoribosyltransferase (345 aa).

5-phospho-alpha-D-ribose 1-diphosphate contacts are provided by residues glycine 88, 91–92 (GD), threonine 96, 98–101 (NIST), 116–124 (KHGNRSASG), and serine 128. Glycine 88 lines the anthranilate pocket. Position 100 (serine 100) interacts with Mg(2+). Asparagine 119 contributes to the anthranilate binding site. Arginine 174 contacts anthranilate. Mg(2+) contacts are provided by aspartate 233 and glutamate 234.

Belongs to the anthranilate phosphoribosyltransferase family. In terms of assembly, homodimer. The cofactor is Mg(2+).

The enzyme catalyses N-(5-phospho-beta-D-ribosyl)anthranilate + diphosphate = 5-phospho-alpha-D-ribose 1-diphosphate + anthranilate. It participates in amino-acid biosynthesis; L-tryptophan biosynthesis; L-tryptophan from chorismate: step 2/5. In terms of biological role, catalyzes the transfer of the phosphoribosyl group of 5-phosphorylribose-1-pyrophosphate (PRPP) to anthranilate to yield N-(5'-phosphoribosyl)-anthranilate (PRA). This chain is Anthranilate phosphoribosyltransferase, found in Prochlorococcus marinus (strain NATL2A).